The primary structure comprises 875 residues: Alanine--tRNA ligase (875 aa).

Positions 564, 568, 666, and 670 each coordinate Zn(2+).

It belongs to the class-II aminoacyl-tRNA synthetase family. Homotetramer. Requires Zn(2+) as cofactor.

The protein localises to the cytoplasm. It carries out the reaction tRNA(Ala) + L-alanine + ATP = L-alanyl-tRNA(Ala) + AMP + diphosphate. In terms of biological role, catalyzes the attachment of alanine to tRNA(Ala) in a two-step reaction: alanine is first activated by ATP to form Ala-AMP and then transferred to the acceptor end of tRNA(Ala). Also edits incorrectly charged Ser-tRNA(Ala) and Gly-tRNA(Ala) via its editing domain. In Citrobacter koseri (strain ATCC BAA-895 / CDC 4225-83 / SGSC4696), this protein is Alanine--tRNA ligase.